The primary structure comprises 84 residues: MDNNVDTITLTDEEGKETEFEVITKLDIEDKEYVVVVPKNEEVDEAIALRIDNNDNGEEVLVPVEEDEEFNMVAEAYELLFSEE.

The protein belongs to the UPF0473 family.

The protein is UPF0473 protein CLI_2624 of Clostridium botulinum (strain Langeland / NCTC 10281 / Type F).